The chain runs to 1472 residues: Adhesion G protein-coupled receptor L1 (1472 aa).

Positions 1-24 (MARLAAVLWSLCVTAILVTSATQG) are cleaved as a signal peptide. Residues 25 to 857 (LSRAGLPFGL…EIYQGRINEL (833 aa)) are Extracellular-facing. Positions 40 to 129 (ACEGYPIELR…KYLEVQYDCV (90 aa)) constitute an SUEL-type lectin domain. 5 disulfides stabilise this stretch: cysteine 41–cysteine 71, cysteine 50–cysteine 128, cysteine 83–cysteine 115, cysteine 96–cysteine 102, and cysteine 140–cysteine 322. An alpha-L-rhamnose-binding site is contributed by glutamate 42. N-linked (GlcNAc...) asparagine glycosylation is present at asparagine 98. Residue 117–120 (GTYK) participates in alpha-L-rhamnose binding. One can recognise an Olfactomedin-like domain in the interval 139–398 (VCPGTLQKVL…VVRYSLEFGP (260 aa)). Residues 400–468 (DPSAGPATSP…APAPSTRRPP (69 aa)) are disordered. Low complexity predominate over residues 405-441 (PATSPPLSTTTTARPTPLTSTASPAATTPLRRAPLTT). The span at 453–468 (DLPPATAPAPSTRRPP) shows a compositional bias: pro residues. Disulfide bonds link cysteine 480/cysteine 515 and cysteine 503/cysteine 532. N-linked (GlcNAc...) asparagine glycans are attached at residues asparagine 531, asparagine 640, asparagine 741, asparagine 800, asparagine 805, and asparagine 826. A GAIN-B domain is found at 669–850 (PARFLAAKQN…AVLMAHREIY (182 aa)). 2 disulfides stabilise this stretch: cysteine 801–cysteine 832 and cysteine 820–cysteine 834. Positions 801 to 850 (CSFWNYSERSMLGYWSTQGCRLVESNKTHTTCACSHLTNFAVLMAHREIY) are GPS. The helical transmembrane segment at 858 to 878 (LLSVITWVGIVISLVCLAICI) threads the bilayer. The Cytoplasmic segment spans residues 879–892 (STFCFLRGLQTDRN). A helical transmembrane segment spans residues 893-913 (TIHKNLCINLFLAELLFLVGI). Over 914-919 (DKTQYE) the chain is Extracellular. Residues 920 to 940 (IACPIFAGLLHYFFLAAFSWL) traverse the membrane as a helical segment. At 941-963 (CLEGVHLYLLLVEVFESEYSRTK) the chain is on the cytoplasmic side. A helical membrane pass occupies residues 964–984 (YYYLGGYCFPALVVGIAAAID). At 985-1001 (YRSYGTEKACWLRVDNY) the chain is on the extracellular side. Residues 1002–1022 (FIWSFIGPVSFVIVVNLVFLM) form a helical membrane-spanning segment. Residues 1023–1049 (VTLHKMVRSSSVLKPDSSRLDNIKSWA) lie on the Cytoplasmic side of the membrane. The chain crosses the membrane as a helical span at residues 1050 to 1070 (LGAIALLFLLGLTWAFGLLFI). Residues 1071–1074 (NKES) are Extracellular-facing. Residues 1075 to 1095 (VVMAYLFTTFNAFQGVFIFVF) traverse the membrane as a helical segment. Residues 1096–1472 (HCALQKKVHK…DGQMQLVTSL (377 aa)) lie on the Cytoplasmic side of the membrane. Arginine 1193 carries the omega-N-methylarginine modification. Phosphoserine is present on serine 1219. Disordered regions lie at residues 1247–1271 (FNNS…PRGR), 1291–1325 (NLRG…GGPG), 1358–1427 (ESES…SRPP), and 1449–1472 (YLAA…VTSL). Pro residues-rich tracts occupy residues 1301 to 1313 (GPPP…PPVP) and 1406 to 1418 (ALPP…PGPP). Serine 1471 is subject to Phosphoserine.

Belongs to the G-protein coupled receptor 2 family. Adhesion G-protein coupled receptor (ADGR) subfamily. As to quaternary structure, forms a heterodimer, consisting of a large extracellular region (p120) non-covalently linked to a seven-transmembrane moiety (p85). Interacts with syntaxin and with proteins of the SHANK family via the PDZ domain. Interacts (via extracellular domain) with FLRT1, FLRT2 and FLRT3 (via extracellular domain). Post-translationally, autoproteolytically cleaved into 2 subunits, an extracellular subunit and a seven-transmembrane subunit. This proteolytic processing takes place early in the biosynthetic pathway, either in the endoplasmic reticulum or in the early compartment of the Golgi apparatus. As to expression, brain-specific expression but low levels are also detected in kidney, lung and spleen.

The protein localises to the cell membrane. Its subcellular location is the cell projection. The protein resides in the axon. It is found in the growth cone. It localises to the synapse. The protein localises to the presynaptic cell membrane. Its subcellular location is the synaptosome. Calcium-independent receptor of high affinity for alpha-latrotoxin, an excitatory neurotoxin present in black widow spider venom which triggers massive exocytosis from neurons and neuroendocrine cells. Receptor for TENM2 that mediates heterophilic synaptic cell-cell contact and postsynaptic specialization. Receptor probably implicated in the regulation of exocytosis. The polypeptide is Adhesion G protein-coupled receptor L1 (Bos taurus (Bovine)).